A 72-amino-acid polypeptide reads, in one-letter code: MDIKEIEELLIQLESKIAFQDATIEELNQVVTQQQIEISRFKEALKIVTERLKSSQSSMLARPEDETPPPHY.

Positions 53–72 are disordered; it reads KSSQSSMLARPEDETPPPHY.

This sequence belongs to the SlyX family.

In Proteus mirabilis (strain HI4320), this protein is Protein SlyX.